The following is a 205-amino-acid chain: Small ribosomal subunit protein uS4 (205 aa).

The S4 RNA-binding domain maps to 94–157; the sequence is SRLDTVVYRM…KQIPLIQESV (64 aa).

This sequence belongs to the universal ribosomal protein uS4 family. Part of the 30S ribosomal subunit. Contacts protein S5. The interaction surface between S4 and S5 is involved in control of translational fidelity.

Its function is as follows. One of the primary rRNA binding proteins, it binds directly to 16S rRNA where it nucleates assembly of the body of the 30S subunit. With S5 and S12 plays an important role in translational accuracy. The protein is Small ribosomal subunit protein uS4 of Rickettsia conorii (strain ATCC VR-613 / Malish 7).